The primary structure comprises 181 residues: Lipoprotein signal peptidase (181 aa).

Helical transmembrane passes span 25-45 (LFYKLTMIGFVGFIILLQVFI), 86-106 (LVYFLQGLLSVIALVFLVFMV), and 107-127 (KYSYIFWITTLAFGSLGNFFD). Active-site residues include Asp-138 and Asp-153. The chain crosses the membrane as a helical span at residues 149 to 169 (FNFADCCITFGFIGLFFCFLI).

This sequence belongs to the peptidase A8 family.

The protein resides in the cell membrane. It carries out the reaction Release of signal peptides from bacterial membrane prolipoproteins. Hydrolyzes -Xaa-Yaa-Zaa-|-(S,diacylglyceryl)Cys-, in which Xaa is hydrophobic (preferably Leu), and Yaa (Ala or Ser) and Zaa (Gly or Ala) have small, neutral side chains.. The protein operates within protein modification; lipoprotein biosynthesis (signal peptide cleavage). Functionally, this protein specifically catalyzes the removal of signal peptides from prolipoproteins. In Mycoplasma genitalium (strain ATCC 33530 / DSM 19775 / NCTC 10195 / G37) (Mycoplasmoides genitalium), this protein is Lipoprotein signal peptidase.